Reading from the N-terminus, the 234-residue chain is 1-(5-phosphoribosyl)-5-[(5-phosphoribosylamino)methylideneamino] imidazole-4-carboxamide isomerase (234 aa).

Asp-9 acts as the Proton acceptor in catalysis. The active-site Proton donor is Asp-131.

Belongs to the HisA/HisF family.

It localises to the cytoplasm. The catalysed reaction is 1-(5-phospho-beta-D-ribosyl)-5-[(5-phospho-beta-D-ribosylamino)methylideneamino]imidazole-4-carboxamide = 5-[(5-phospho-1-deoxy-D-ribulos-1-ylimino)methylamino]-1-(5-phospho-beta-D-ribosyl)imidazole-4-carboxamide. The protein operates within amino-acid biosynthesis; L-histidine biosynthesis; L-histidine from 5-phospho-alpha-D-ribose 1-diphosphate: step 4/9. In Staphylococcus aureus (strain NCTC 8325 / PS 47), this protein is 1-(5-phosphoribosyl)-5-[(5-phosphoribosylamino)methylideneamino] imidazole-4-carboxamide isomerase.